We begin with the raw amino-acid sequence, 220 residues long: Elongation factor Ts, chloroplastic (220 aa).

It belongs to the EF-Ts family.

It is found in the plastid. The protein resides in the chloroplast. In terms of biological role, associates with the EF-Tu.GDP complex and induces the exchange of GDP to GTP. It remains bound to the aminoacyl-tRNA.EF-Tu.GTP complex up to the GTP hydrolysis stage on the ribosome. This Porphyra purpurea (Red seaweed) protein is Elongation factor Ts, chloroplastic (tsf).